A 241-amino-acid chain; its full sequence is Phosphoadenosine 5'-phosphosulfate reductase (241 aa).

Cys-235 functions as the Nucleophile; cysteine thiosulfonate intermediate in the catalytic mechanism.

Belongs to the PAPS reductase family. CysH subfamily.

Its subcellular location is the cytoplasm. The catalysed reaction is [thioredoxin]-disulfide + sulfite + adenosine 3',5'-bisphosphate + 2 H(+) = [thioredoxin]-dithiol + 3'-phosphoadenylyl sulfate. It participates in sulfur metabolism; hydrogen sulfide biosynthesis; sulfite from sulfate: step 3/3. Catalyzes the formation of sulfite from phosphoadenosine 5'-phosphosulfate (PAPS) using thioredoxin as an electron donor. This is Phosphoadenosine 5'-phosphosulfate reductase from Xanthomonas campestris pv. campestris (strain 8004).